A 665-amino-acid chain; its full sequence is DNA ligase (665 aa).

NAD(+)-binding positions include 31–35, 80–81, and glutamate 110; these read DQEFD and SL. Lysine 112 functions as the N6-AMP-lysine intermediate in the catalytic mechanism. The NAD(+) site is built by arginine 133, glutamate 170, lysine 285, and lysine 309. Positions 403, 406, 421, and 427 each coordinate Zn(2+). In terms of domain architecture, BRCT spans 587-665; sequence EHTDKLAGKS…SEEEFLQMIE (79 aa).

Belongs to the NAD-dependent DNA ligase family. LigA subfamily. The cofactor is Mg(2+). Mn(2+) is required as a cofactor.

It catalyses the reaction NAD(+) + (deoxyribonucleotide)n-3'-hydroxyl + 5'-phospho-(deoxyribonucleotide)m = (deoxyribonucleotide)n+m + AMP + beta-nicotinamide D-nucleotide.. DNA ligase that catalyzes the formation of phosphodiester linkages between 5'-phosphoryl and 3'-hydroxyl groups in double-stranded DNA using NAD as a coenzyme and as the energy source for the reaction. It is essential for DNA replication and repair of damaged DNA. The polypeptide is DNA ligase (Phocaeicola vulgatus (strain ATCC 8482 / DSM 1447 / JCM 5826 / CCUG 4940 / NBRC 14291 / NCTC 11154) (Bacteroides vulgatus)).